Consider the following 345-residue polypeptide: Acetylserotonin O-methyltransferase (345 aa).

Residues tyrosine 147, tryptophan 164, aspartate 210, 235-237 (GDF), and arginine 252 each bind S-adenosyl-L-methionine. Histidine 255 acts as the Proton donor/acceptor in catalysis. Residues aspartate 256, asparagine 302, and glutamine 306 each coordinate substrate.

The protein belongs to the class I-like SAM-binding methyltransferase superfamily. Cation-independent O-methyltransferase family. In terms of assembly, homodimer. In terms of tissue distribution, highly expressed in pineal gland. In the retina, 10- to 100-fold lower expression compared to pineal gland, if any.

The enzyme catalyses N-acetylserotonin + S-adenosyl-L-methionine = melatonin + S-adenosyl-L-homocysteine + H(+). The protein operates within aromatic compound metabolism; melatonin biosynthesis; melatonin from serotonin: step 1/2. In terms of biological role, catalyzes the transfer of a methyl group onto N-acetylserotonin, producing melatonin (N-acetyl-5-methoxytryptamine). The sequence is that of Acetylserotonin O-methyltransferase (ASMT) from Macaca mulatta (Rhesus macaque).